We begin with the raw amino-acid sequence, 241 residues long: Large ribosomal subunit protein uL3 (241 aa).

2 disordered regions span residues 140-168 (SHRSIGSTGGRQDPGKTFKNKKMPGHMGD) and 216-241 (APKPGAFKLNGSEAAPAAEAVNEEGA). Gln-151 bears the N5-methylglutamine mark.

The protein belongs to the universal ribosomal protein uL3 family. In terms of assembly, part of the 50S ribosomal subunit. Forms a cluster with proteins L14 and L19. Methylated by PrmB.

Functionally, one of the primary rRNA binding proteins, it binds directly near the 3'-end of the 23S rRNA, where it nucleates assembly of the 50S subunit. The polypeptide is Large ribosomal subunit protein uL3 (Xanthobacter autotrophicus (strain ATCC BAA-1158 / Py2)).